We begin with the raw amino-acid sequence, 402 residues long: 1-deoxy-D-xylulose 5-phosphate reductoisomerase (402 aa).

Residues T13, G14, S15, I16, and N126 each coordinate NADPH. K127 provides a ligand contact to 1-deoxy-D-xylulose 5-phosphate. E128 serves as a coordination point for NADPH. Position 152 (D152) interacts with Mn(2+). S153, E154, S188, and H211 together coordinate 1-deoxy-D-xylulose 5-phosphate. Residue E154 participates in Mn(2+) binding. G217 lines the NADPH pocket. 1-deoxy-D-xylulose 5-phosphate is bound by residues S224, N229, K230, and E233. E233 contributes to the Mn(2+) binding site.

Belongs to the DXR family. Requires Mg(2+) as cofactor. The cofactor is Mn(2+).

The catalysed reaction is 2-C-methyl-D-erythritol 4-phosphate + NADP(+) = 1-deoxy-D-xylulose 5-phosphate + NADPH + H(+). It participates in isoprenoid biosynthesis; isopentenyl diphosphate biosynthesis via DXP pathway; isopentenyl diphosphate from 1-deoxy-D-xylulose 5-phosphate: step 1/6. In terms of biological role, catalyzes the NADPH-dependent rearrangement and reduction of 1-deoxy-D-xylulose-5-phosphate (DXP) to 2-C-methyl-D-erythritol 4-phosphate (MEP). This chain is 1-deoxy-D-xylulose 5-phosphate reductoisomerase, found in Psychrobacter arcticus (strain DSM 17307 / VKM B-2377 / 273-4).